A 1007-amino-acid chain; its full sequence is Beta-galactosidase (1007 aa).

The tract at residues 29 to 48 (TIPPHSDHESFQSQEELEEG) is disordered. Glu465 functions as the Proton donor in the catalytic mechanism. The active-site Nucleophile is Glu532.

This sequence belongs to the glycosyl hydrolase 2 family. As to quaternary structure, monomer.

It carries out the reaction Hydrolysis of terminal non-reducing beta-D-galactose residues in beta-D-galactosides.. The polypeptide is Beta-galactosidase (lacZ) (Lactobacillus delbrueckii subsp. bulgaricus).